Consider the following 42-residue polypeptide: Photosystem I reaction center subunit IX (42 aa).

The chain crosses the membrane as a helical span at residues 7–27; sequence YLSIAPVLATLWFGFLVGSLI.

It belongs to the PsaJ family.

Its subcellular location is the plastid membrane. Functionally, may help in the organization of the PsaE and PsaF subunits. This is Photosystem I reaction center subunit IX from Aneura mirabilis (Parasitic liverwort).